A 603-amino-acid polypeptide reads, in one-letter code: NAD 5'-nucleotidase (603 aa).

An N-terminal signal peptide occupies residues 1–25 (MLLSKKSASFALSAFAMLFTSVALA). The Zn(2+) site is built by aspartate 44, histidine 46, aspartate 94, asparagine 126, and histidine 227. Residues arginine 397, arginine 437, phenylalanine 456, and 540-546 (YVAGGKD) each bind substrate.

Belongs to the 5'-nucleotidase family. Zn(2+) is required as a cofactor.

The protein localises to the periplasm. The catalysed reaction is a ribonucleoside 5'-phosphate + H2O = a ribonucleoside + phosphate. Degrades NAD into adenosine and nicotinamide riboside, the latter being subsequently internalized by a specific permease. Also endowed with NAD(P) pyrophosphatase activity. Exhibits a broad substrate specificity, recognizing either mono- or dinucleotide nicotinamides and different adenosine phosphates with a maximal activity on 5'-adenosine monophosphate. The sequence is that of NAD 5'-nucleotidase from Haemophilus influenzae (strain ATCC 51907 / DSM 11121 / KW20 / Rd).